The following is a 119-amino-acid chain: Transcription and mRNA export factor SUS1 (119 aa).

Belongs to the ENY2 family. Component of the nuclear pore complex (NPC)-associated TREX-2 complex (transcription and export complex 2), composed of at least SUS1, SAC3, THP1, SEM1, and CDC31. TREX-2 contains 2 SUS1 chains. The TREX-2 complex interacts with the nucleoporin NUP1. Component of the 1.8 MDa SAGA transcription coactivator-HAT complex. SAGA is built of 5 distinct domains with specialized functions. Within the SAGA complex, SUS1, SGF11, SGF73 and UBP8 form an additional subcomplex of SAGA called the DUB module (deubiquitination module). Interacts directly with THP1, SAC3, SGF11, and with the RNA polymerase II.

It localises to the nucleus. The protein resides in the nucleoplasm. Its subcellular location is the cytoplasm. It is found in the P-body. In terms of biological role, involved in mRNA export coupled transcription activation by association with both the TREX-2 and the SAGA complexes. At the promoters, SAGA is required for recruitment of the basal transcription machinery. It influences RNA polymerase II transcriptional activity through different activities such as TBP interaction and promoter selectivity, interaction with transcription activators, and chromatin modification through histone acetylation and deubiquitination. Within the SAGA complex, participates in a subcomplex required for deubiquitination of H2B and for the maintenance of steady-state H3 methylation levels. The TREX-2 complex functions in docking export-competent ribonucleoprotein particles (mRNPs) to the nuclear entrance of the nuclear pore complex (nuclear basket). TREX-2 participates in mRNA export and accurate chromatin positioning in the nucleus by tethering genes to the nuclear periphery. May also be involved in cytoplasmic mRNA decay by interaction with components of P-bodies. The sequence is that of Transcription and mRNA export factor SUS1 from Candida albicans (strain SC5314 / ATCC MYA-2876) (Yeast).